The chain runs to 222 residues: Charged multivesicular body protein 3 (222 aa).

A lipid anchor (N-myristoyl glycine) is attached at G2. The interval 2–113 is intramolecular interaction with C-terminus; the sequence is GLFGKTQEKP…LQKSTEVMKA (112 aa). The stretch at 22–54 forms a coiled coil; the sequence is KIRKEMRVVDRQIRDIQREEEKVKRSVKDAAKK. 2 important for autoinhibitory function regions span residues 59–64 and 168–169; these read VCVVLA and IL. The stretch at 149–222 forms a coiled coil; it reads ESMDDQEEME…MQSRLATLRS (74 aa). The intramolecular interaction with N-terminus stretch occupies residues 151–220; sequence MDDQEEMEEA…EAMQSRLATL (70 aa). The interval 151–222 is interaction with VPS4A; that stretch reads MDDQEEMEEA…MQSRLATLRS (72 aa). Residue K179 forms a Glycyl lysine isopeptide (Lys-Gly) (interchain with G-Cter in ubiquitin) linkage. Residues 180–222 are disordered; sequence APSKVTDALPEPEPLGAMAASEDEEEEEEALEAMQSRLATLRS. 3 interaction with STAMBP regions span residues 196–222, 203–207, and 221–222; these read AMAA…TLRS, EEEEE, and RS. S200 carries the phosphoserine modification. A compositionally biased stretch (acidic residues) spans 200 to 210; it reads SEDEEEEEEAL. Residues 201–211 carry the MIT-interacting motif motif; sequence EDEEEEEEALE.

It belongs to the SNF7 family. As to quaternary structure, probable core component of the endosomal sorting required for transport complex III (ESCRT-III). ESCRT-III components are thought to multimerize to form a flat lattice on the perimeter membrane of the endosome. Several assembly forms of ESCRT-III may exist that interact and act sequentially. Forms a metastable monomer in solution; its core structure (without part of the putative autoinhibitory C-terminal acidic region) oligomerizes into a flat lattice via two different dimerization interfaces. In vitro, heteromerizes with CHMP2A (but not CHMP4) to form helical tubular structures that expose membrane-interacting sites on the outside whereas VPS4B can associate on the inside of the tubule. May interact with IGFBP7; the relevance of such interaction however remains unclear. Interacts with CHMP2A. Interacts with CHMP4A; the interaction requires the release of CHMP4A autoinhibition. Interacts with VPS4A. Interacts with STAMBP; the interaction appears to relieve the autoinhibition of CHMP3. Interacts with VTA1.

It is found in the cytoplasm. Its subcellular location is the cytosol. The protein localises to the membrane. The protein resides in the endosome. It localises to the late endosome membrane. Probable core component of the endosomal sorting required for transport complex III (ESCRT-III) which is involved in multivesicular bodies (MVBs) formation and sorting of endosomal cargo proteins into MVBs. MVBs contain intraluminal vesicles (ILVs) that are generated by invagination and scission from the limiting membrane of the endosome and mostly are delivered to lysosomes enabling degradation of membrane proteins, such as stimulated growth factor receptors, lysosomal enzymes and lipids. The MVB pathway appears to require the sequential function of ESCRT-O, -I,-II and -III complexes. ESCRT-III proteins mostly dissociate from the invaginating membrane before the ILV is released. The ESCRT machinery also functions in topologically equivalent membrane fission events, such as the terminal stages of cytokinesis and the budding of enveloped viruses (lentiviruses). ESCRT-III proteins are believed to mediate the necessary vesicle extrusion and/or membrane fission activities, possibly in conjunction with the AAA ATPase VPS4. Selectively binds to phosphatidylinositol 3,5-bisphosphate PtdIns(3,5)P2 and PtdIns(3,4)P2 in preference to other phosphoinositides tested. Involved in late stages of cytokinesis. Plays a role in endosomal sorting/trafficking of EGF receptor. The sequence is that of Charged multivesicular body protein 3 (CHMP3) from Bos taurus (Bovine).